The following is a 315-amino-acid chain: MYDWLNALPKAELHLHLEGSLEPELLFALAERNKIALPWADVETLRGAYAFNNLQEFLDLYYQGADVLRTEQDFYDLTWAYLQRCKAQNVIHTEPFFDPQTHTDRGIAFEVVLNGISQALKDGREQLGISSGLILSFLRHLSEDEAQKTLDQALPFRDAFIAVGLDSSEMGHPPSKFQRVFDRARSEGFVAVAHAGEEGPPEYIWEALDLLKIKRIDHGVRAIEDERLMQRIIDEQIPLTVCPLSNTKLCVFDHMSQHNILDMLERGVKVTVNSDDPAYFGGYVTENFHALHTHLGMTEDQARRLAQNSLDARLV.

Zn(2+)-binding residues include histidine 14, histidine 16, and histidine 194. Glutamate 197 serves as the catalytic Proton donor. Aspartate 275 serves as a coordination point for Zn(2+). A substrate-binding site is contributed by aspartate 276.

Belongs to the metallo-dependent hydrolases superfamily. Adenosine and AMP deaminases family. Adenine deaminase type 2 subfamily. It depends on Zn(2+) as a cofactor.

It carries out the reaction adenine + H2O + H(+) = hypoxanthine + NH4(+). Functionally, catalyzes the hydrolytic deamination of adenine to hypoxanthine. Plays an important role in the purine salvage pathway and in nitrogen catabolism. This is Adenine deaminase from Pseudomonas putida (strain ATCC 47054 / DSM 6125 / CFBP 8728 / NCIMB 11950 / KT2440).